Here is a 287-residue protein sequence, read N- to C-terminus: NAD kinase (287 aa).

Aspartate 56 acts as the Proton acceptor in catalysis. NAD(+)-binding positions include aspartate 56–glycine 57, arginine 61, asparagine 128–aspartate 129, and aspartate 156.

Belongs to the NAD kinase family. It depends on a divalent metal cation as a cofactor.

The protein resides in the cytoplasm. It carries out the reaction NAD(+) + ATP = ADP + NADP(+) + H(+). Involved in the regulation of the intracellular balance of NAD and NADP, and is a key enzyme in the biosynthesis of NADP. Catalyzes specifically the phosphorylation on 2'-hydroxyl of the adenosine moiety of NAD to yield NADP. This Thermomicrobium roseum (strain ATCC 27502 / DSM 5159 / P-2) protein is NAD kinase.